Here is a 290-residue protein sequence, read N- to C-terminus: S-methyl-5'-thioadenosine phosphorylase 2 (290 aa).

Phosphate contacts are provided by residues Ser-14, Arg-57–His-58, and Ser-90–Ala-91. Met-185 serves as a coordination point for substrate. Position 186 (Ser-186) interacts with phosphate. Asp-209–Asp-211 provides a ligand contact to substrate.

It belongs to the PNP/MTAP phosphorylase family. MTAP subfamily. In terms of assembly, homotrimer.

Its subcellular location is the cytoplasm. The protein resides in the nucleus. The catalysed reaction is S-methyl-5'-thioadenosine + phosphate = 5-(methylsulfanyl)-alpha-D-ribose 1-phosphate + adenine. It participates in amino-acid biosynthesis; L-methionine biosynthesis via salvage pathway; S-methyl-5-thio-alpha-D-ribose 1-phosphate from S-methyl-5'-thioadenosine (phosphorylase route): step 1/1. In terms of biological role, catalyzes the reversible phosphorylation of S-methyl-5'-thioadenosine (MTA) to adenine and 5-methylthioribose-1-phosphate. Involved in the breakdown of MTA, a major by-product of polyamine biosynthesis. Responsible for the first step in the methionine salvage pathway after MTA has been generated from S-adenosylmethionine. Has broad substrate specificity with 6-aminopurine nucleosides as preferred substrates. This is S-methyl-5'-thioadenosine phosphorylase 2 from Puccinia graminis f. sp. tritici (strain CRL 75-36-700-3 / race SCCL) (Black stem rust fungus).